The chain runs to 356 residues: Palmitoyltransferase swf1 (356 aa).

Topologically, residues M1–D2 are lumenal. Residues F3–F23 traverse the membrane as a helical segment. Residues G24–P78 lie on the Cytoplasmic side of the membrane. The chain crosses the membrane as a helical span at residues L79–G99. Residues S100–S107 are Lumenal-facing. The chain crosses the membrane as a helical span at residues I108–A128. At A129 to R201 the chain is on the cytoplasmic side. The DHHC domain maps to N158–L208. Residues Y202–G222 form a helical membrane-spanning segment. The Lumenal segment spans residues Y223–S253. A helical membrane pass occupies residues V254–F274. Over L275–T356 the chain is Cytoplasmic.

It belongs to the DHHC palmitoyltransferase family. SWF1 subfamily.

The protein localises to the endoplasmic reticulum membrane. It carries out the reaction L-cysteinyl-[protein] + hexadecanoyl-CoA = S-hexadecanoyl-L-cysteinyl-[protein] + CoA. Palmitoyltransferase that targets several endosomal SNAREs. Palmitoylates the SNAREs at cysteine residues close to the cytoplasmic end of their transmembrane domain. May have a role in the cellular quality control of transmembrane domain-containing proteins. In Schizosaccharomyces pombe (strain 972 / ATCC 24843) (Fission yeast), this protein is Palmitoyltransferase swf1 (swf1).